The primary structure comprises 88 residues: Gene 86 protein (88 aa).

In Mycobacterium phage D29 (Mycobacteriophage D29), this protein is Gene 86 protein (86).